The sequence spans 167 residues: 3-isopropylmalate dehydratase small subunit (167 aa).

The protein belongs to the LeuD family. LeuD type 2 subfamily. In terms of assembly, heterodimer of LeuC and LeuD.

It catalyses the reaction (2R,3S)-3-isopropylmalate = (2S)-2-isopropylmalate. The protein operates within amino-acid biosynthesis; L-leucine biosynthesis; L-leucine from 3-methyl-2-oxobutanoate: step 2/4. Functionally, catalyzes the isomerization between 2-isopropylmalate and 3-isopropylmalate, via the formation of 2-isopropylmaleate. This Wolinella succinogenes (strain ATCC 29543 / DSM 1740 / CCUG 13145 / JCM 31913 / LMG 7466 / NCTC 11488 / FDC 602W) (Vibrio succinogenes) protein is 3-isopropylmalate dehydratase small subunit.